Reading from the N-terminus, the 217-residue chain is MPKKFQSENTKSAAARARKAEAKAVADAKRKKETEDAFWQDDDKHVVRKEHRKEEKEKKRLELLERKKESQRLLDEEDSKMKGKPTKPAAPSKVTRAQIEETLCKEEKHKDAPEKPKTHLEIPLEENVNRRVLEEGEVEARTVEDAIAALSIGKELDRHPERRMKAAFTAFEEINMPLLKQENPNMRLSQLKQLLKKEWMKSPENPMNQKYATYNSH.

Residues 1 to 123 form a disordered region; it reads MPKKFQSENT…EKPKTHLEIP (123 aa). 3 stretches are compositionally biased toward basic and acidic residues: residues 18 to 45, 52 to 74, and 98 to 123; these read RKAEAKAVADAKRKKETEDAFWQDDDKH, RKEEKEKKRLELLERKKESQRLL, and QIEETLCKEEKHKDAPEKPKTHLEIP. Positions 41–83 form a coiled coil; that stretch reads DDDKHVVRKEHRKEEKEKKRLELLERKKESQRLLDEEDSKMKG.

Belongs to the CCDC124 family. In terms of assembly, associates with translationally inactive ribosomes in the nonrotated state.

The protein resides in the cytoplasm. It is found in the cytoskeleton. It localises to the microtubule organizing center. Its subcellular location is the centrosome. The protein localises to the midbody. Its function is as follows. Ribosome-binding protein involved in ribosome hibernation: associates with translationally inactive ribosomes and stabilizes the nonrotated conformation of the 80S ribosome, thereby promoting ribosome preservation and storage. The polypeptide is Coiled-coil domain-containing protein 124-B (ccdc124-b) (Xenopus laevis (African clawed frog)).